Consider the following 176-residue polypeptide: Inorganic pyrophosphatase (176 aa).

Substrate is bound by residues lysine 30, arginine 44, and tyrosine 56. 3 residues coordinate Mg(2+): aspartate 66, aspartate 71, and aspartate 103. Tyrosine 142 contributes to the substrate binding site.

It belongs to the PPase family. As to quaternary structure, homohexamer. Requires Mg(2+) as cofactor.

Its subcellular location is the cytoplasm. It carries out the reaction diphosphate + H2O = 2 phosphate + H(+). In terms of biological role, catalyzes the hydrolysis of inorganic pyrophosphate (PPi) forming two phosphate ions. The chain is Inorganic pyrophosphatase from Salmonella typhi.